We begin with the raw amino-acid sequence, 82 residues long: Large ribosomal subunit protein bL27 (82 aa).

Residues 1–21 are disordered; it reads MAHKKGASSSRNGRDSNAKRL.

It belongs to the bacterial ribosomal protein bL27 family.

The protein is Large ribosomal subunit protein bL27 of Tropheryma whipplei (strain TW08/27) (Whipple's bacillus).